Consider the following 506-residue polypeptide: Histidine ammonia-lyase (506 aa).

The segment at residues 143 to 145 is a cross-link (5-imidazolinone (Ala-Gly)); the sequence is ASG. Ser-144 carries the 2,3-didehydroalanine (Ser) modification.

The protein belongs to the PAL/histidase family. In terms of processing, contains an active site 4-methylidene-imidazol-5-one (MIO), which is formed autocatalytically by cyclization and dehydration of residues Ala-Ser-Gly.

It is found in the cytoplasm. It catalyses the reaction L-histidine = trans-urocanate + NH4(+). It functions in the pathway amino-acid degradation; L-histidine degradation into L-glutamate; N-formimidoyl-L-glutamate from L-histidine: step 1/3. This Salmonella arizonae (strain ATCC BAA-731 / CDC346-86 / RSK2980) protein is Histidine ammonia-lyase.